The following is a 153-amino-acid chain: Ribosomal RNA large subunit methyltransferase H (153 aa).

S-adenosyl-L-methionine-binding positions include leucine 70, glycine 102, and 121–126; that span reads LSAMTF.

It belongs to the RNA methyltransferase RlmH family. Homodimer.

It is found in the cytoplasm. It carries out the reaction pseudouridine(1915) in 23S rRNA + S-adenosyl-L-methionine = N(3)-methylpseudouridine(1915) in 23S rRNA + S-adenosyl-L-homocysteine + H(+). Functionally, specifically methylates the pseudouridine at position 1915 (m3Psi1915) in 23S rRNA. The sequence is that of Ribosomal RNA large subunit methyltransferase H from Trichlorobacter lovleyi (strain ATCC BAA-1151 / DSM 17278 / SZ) (Geobacter lovleyi).